The chain runs to 1604 residues: Calmodulin-regulated spectrin-associated protein 1 (1604 aa).

Serine 216 carries the post-translational modification Phosphoserine. In terms of domain architecture, Calponin-homology (CH) spans proline 235 to glutamate 350. Phosphoserine occurs at positions 390, 394, and 435. The interval serine 394 to glycine 413 is disordered. The disordered stretch occupies residues arginine 444–proline 491. At threonine 531 the chain carries Phosphothreonine. Serine 571, serine 574, serine 581, serine 593, serine 607, serine 647, serine 739, serine 745, serine 755, and serine 757 each carry phosphoserine. The interval methionine 642–phenylalanine 671 is disordered. Basic and acidic residues predominate over residues glutamate 784–serine 806. Disordered regions lie at residues glutamate 784–methionine 824 and leucine 842–alanine 888. 2 stretches are compositionally biased toward low complexity: residues leucine 813 to methionine 824 and threonine 847 to threonine 858. Positions glutamine 874–aspartate 886 are enriched in basic and acidic residues. Positions alanine 888–isoleucine 909 are sufficient for interaction with SPTBN1. 2 coiled-coil regions span residues leucine 890–lysine 926 and aspartate 1026–leucine 1058. The tract at residues serine 920–glycine 939 is sufficient for interaction with calmodulin. Disordered regions lie at residues phenylalanine 1085–proline 1163, proline 1246–valine 1271, and arginine 1298–tryptophan 1448. Serine 1090 carries the post-translational modification Phosphoserine. The segment covering arginine 1113–glutamine 1124 has biased composition (basic and acidic residues). Polar residues predominate over residues glutamine 1125–valine 1137. The residue at position 1154 (serine 1154) is a Phosphoserine. 2 stretches are compositionally biased toward basic and acidic residues: residues proline 1246 to serine 1258 and arginine 1298 to arginine 1348. Residues alanine 1286–glutamate 1357 adopt a coiled-coil conformation. The span at proline 1363–serine 1374 shows a compositional bias: basic residues. A compositionally biased stretch (polar residues) spans serine 1382–asparagine 1394. Residues leucine 1395 to threonine 1412 show a composition bias toward low complexity. Serine 1400 and serine 1429 each carry phosphoserine. Residues glycine 1465–lysine 1599 form the CKK domain. The residue at position 1539 (tyrosine 1539) is a Phosphotyrosine.

The protein belongs to the CAMSAP1 family. As to quaternary structure, interacts with spectrin via SPTBN1; the interaction is direct. Interacts with calmodulin; calcium-dependent it prevents interaction with spectrin. As to expression, in brain, specifically expressed in astrocytes (at protein level).

It is found in the cytoplasm. It localises to the cytoskeleton. Its function is as follows. Key microtubule-organizing protein that specifically binds the minus-end of non-centrosomal microtubules and regulates their dynamics and organization. Specifically recognizes growing microtubule minus-ends and stabilizes microtubules. Acts on free microtubule minus-ends that are not capped by microtubule-nucleating proteins or other factors and protects microtubule minus-ends from depolymerization. In contrast to CAMSAP2 and CAMSAP3, tracks along the growing tips of minus-end microtubules without significantly affecting the polymerization rate: binds at the very tip of the microtubules minus-end and acts as a minus-end tracking protein (-TIP) that dissociates from microtubules after allowing tubulin incorporation. Through interaction with spectrin may regulate neurite outgrowth. This Rattus norvegicus (Rat) protein is Calmodulin-regulated spectrin-associated protein 1 (Camsap1).